The sequence spans 447 residues: Glutamate--tRNA ligase 1 (447 aa).

The 'HIGH' region signature appears at 10 to 20 (PSPTGMLHVGN). Positions 240-244 (KISKR) match the 'KMSKS' region motif. K243 is an ATP binding site.

It belongs to the class-I aminoacyl-tRNA synthetase family. Glutamate--tRNA ligase type 1 subfamily. As to quaternary structure, monomer.

It is found in the cytoplasm. It carries out the reaction tRNA(Glu) + L-glutamate + ATP = L-glutamyl-tRNA(Glu) + AMP + diphosphate. Catalyzes the attachment of glutamate to tRNA(Glu) in a two-step reaction: glutamate is first activated by ATP to form Glu-AMP and then transferred to the acceptor end of tRNA(Glu). The polypeptide is Glutamate--tRNA ligase 1 (Rickettsia conorii (strain ATCC VR-613 / Malish 7)).